The primary structure comprises 115 residues: Replication initiation control protein YabA (115 aa).

Residues histidine 90, cysteine 92, cysteine 106, and cysteine 109 each coordinate Zn(2+).

It belongs to the YabA family. In terms of assembly, homotetramer. Interacts with both DnaA and DnaN, acting as a bridge between these two proteins. Zn(2+) serves as cofactor.

It localises to the cytoplasm. The protein localises to the nucleoid. In terms of biological role, involved in control of chromosome replication initiation. Inhibits the cooperative binding of DnaA to the oriC region, thus negatively regulating initiation of chromosome replication. Inhibits the ability of DnaA-ATP to form a helix on DNA; does not disassemble preformed DnaA-DNA helices. Decreases the residence time of DnaA on the chromosome at its binding sites (oriC, replication forks and promoter-binding sites). Tethers DnaA to the replication machinery via the DNA polymerase beta sliding clamp subunit (dnaN). Associates with oriC and other DnaA targets on the chromosome in a DnaA-dependent manner. The chain is Replication initiation control protein YabA from Staphylococcus aureus (strain JH1).